A 301-amino-acid chain; its full sequence is MSVREKMLEILEGIDIRFQEPLHSYSYTKVGGEADYLVFPRNRFELARVVKFANQENIPWMVLGNASNIIVRDGGIRGFVILCDKLNNVSVDGYTIEAEAGANLIETTRIALRHSLTGFEFACGIPGSVGGAVFMNAGAYGGEIAHILQSCKVLTKDGEIETLSAKDLAFGYRHSAIQESGAVVLSVKFALAPGTHQVIKQEMDRLTHLRELKQPLEYPSCGSVFKRPVGHFAGQLISEAGLKGYRIGGVEVSEKHAGFMINVADGTAKDYEDLIQSVIEKVKEHSGITLEREVRILGESK.

The FAD-binding PCMH-type domain occupies Val-30 to Gly-194. Arg-173 is a catalytic residue. The active-site Proton donor is the Ser-223. Glu-293 is a catalytic residue.

The protein belongs to the MurB family. Requires FAD as cofactor.

Its subcellular location is the cytoplasm. The enzyme catalyses UDP-N-acetyl-alpha-D-muramate + NADP(+) = UDP-N-acetyl-3-O-(1-carboxyvinyl)-alpha-D-glucosamine + NADPH + H(+). The protein operates within cell wall biogenesis; peptidoglycan biosynthesis. Its function is as follows. Cell wall formation. This Streptococcus pneumoniae (strain 70585) protein is UDP-N-acetylenolpyruvoylglucosamine reductase.